A 205-amino-acid chain; its full sequence is MIALVDYGGGNLKSVANAIHALGYEFKLTSSPEEILSAEAVILPGVGAAADTMAGLQSKGLDKAIKELVARDIPLLAICVGMQVLFDYTAEGDNTKCLGILKGDVKRLPEGLKIPQMGWNQLKQRVSHPIFEGIPDGIDFYFVHSYYASPADPGIIGATTDYGVDFCSLVISKRLIATQFHPEKSGSYGLKLYQNFFKMALGDKK.

The 205-residue stretch at 1 to 205 folds into the Glutamine amidotransferase type-1 domain; that stretch reads MIALVDYGGG…FFKMALGDKK (205 aa). The active-site Nucleophile is the Cys79. Catalysis depends on residues His181 and Glu183.

Heterodimer of HisH and HisF.

Its subcellular location is the cytoplasm. The catalysed reaction is 5-[(5-phospho-1-deoxy-D-ribulos-1-ylimino)methylamino]-1-(5-phospho-beta-D-ribosyl)imidazole-4-carboxamide + L-glutamine = D-erythro-1-(imidazol-4-yl)glycerol 3-phosphate + 5-amino-1-(5-phospho-beta-D-ribosyl)imidazole-4-carboxamide + L-glutamate + H(+). It carries out the reaction L-glutamine + H2O = L-glutamate + NH4(+). It participates in amino-acid biosynthesis; L-histidine biosynthesis; L-histidine from 5-phospho-alpha-D-ribose 1-diphosphate: step 5/9. Its function is as follows. IGPS catalyzes the conversion of PRFAR and glutamine to IGP, AICAR and glutamate. The HisH subunit catalyzes the hydrolysis of glutamine to glutamate and ammonia as part of the synthesis of IGP and AICAR. The resulting ammonia molecule is channeled to the active site of HisF. In Dehalococcoides mccartyi (strain ATCC BAA-2266 / KCTC 15142 / 195) (Dehalococcoides ethenogenes (strain 195)), this protein is Imidazole glycerol phosphate synthase subunit HisH.